We begin with the raw amino-acid sequence, 1383 residues long: DNA-directed RNA polymerase subunit beta (1383 aa).

Belongs to the RNA polymerase beta chain family. In terms of assembly, the RNAP catalytic core consists of 2 alpha, 1 beta, 1 beta' and 1 omega subunit. When a sigma factor is associated with the core the holoenzyme is formed, which can initiate transcription.

The catalysed reaction is RNA(n) + a ribonucleoside 5'-triphosphate = RNA(n+1) + diphosphate. Its function is as follows. DNA-dependent RNA polymerase catalyzes the transcription of DNA into RNA using the four ribonucleoside triphosphates as substrates. The sequence is that of DNA-directed RNA polymerase subunit beta from Anaplasma phagocytophilum (strain HZ).